The chain runs to 561 residues: Potassium-transporting ATPase potassium-binding subunit (561 aa).

12 helical membrane passes run 5–25 (LAAG…YVPV), 60–80 (YGYA…LYAL), 86–106 (VLPL…NTAV), 131–151 (GLAV…VALI), 177–197 (ILLP…VIQS), 247–267 (PTPV…VSLT), 281–301 (LTLL…TLAA), 324–344 (FGIP…TGAV), 376–396 (GLYG…LLVG), 415–435 (ALSV…TVIL), 488–508 (ALGL…LALA), and 537–557 (GTVV…GPIA).

Belongs to the KdpA family. In terms of assembly, the system is composed of three essential subunits: KdpA, KdpB and KdpC.

The protein resides in the cell membrane. In terms of biological role, part of the high-affinity ATP-driven potassium transport (or Kdp) system, which catalyzes the hydrolysis of ATP coupled with the electrogenic transport of potassium into the cytoplasm. This subunit binds the extracellular potassium ions and delivers the ions to the membrane domain of KdpB through an intramembrane tunnel. The polypeptide is Potassium-transporting ATPase potassium-binding subunit (Rhodococcus opacus (strain B4)).